Here is a 179-residue protein sequence, read N- to C-terminus: Large ribosomal subunit protein uL5 (179 aa).

Belongs to the universal ribosomal protein uL5 family. As to quaternary structure, part of the 50S ribosomal subunit; part of the 5S rRNA/L5/L18/L25 subcomplex. Contacts the 5S rRNA and the P site tRNA. Forms a bridge to the 30S subunit in the 70S ribosome.

In terms of biological role, this is one of the proteins that bind and probably mediate the attachment of the 5S RNA into the large ribosomal subunit, where it forms part of the central protuberance. In the 70S ribosome it contacts protein S13 of the 30S subunit (bridge B1b), connecting the 2 subunits; this bridge is implicated in subunit movement. Contacts the P site tRNA; the 5S rRNA and some of its associated proteins might help stabilize positioning of ribosome-bound tRNAs. The chain is Large ribosomal subunit protein uL5 from Proteus mirabilis (strain HI4320).